We begin with the raw amino-acid sequence, 215 residues long: Myelin protein zero-like protein 2 (215 aa).

An N-terminal signal peptide occupies residues 1–26 (MYGKSPTRAVLFLLGLQLTALWPTAA). Positions 27-141 (VEIYTPRVLE…DGLIGEIQLS (115 aa)) constitute an Ig-like V-type domain. At 27 to 154 (VEIYTPRVLE…TVRFSEIHFL (128 aa)) the chain is on the extracellular side. N-linked (GlcNAc...) asparagine glycosylation is found at asparagine 39 and asparagine 118. Cysteine 47 and cysteine 123 are disulfide-bonded. Residues 155-175 (ALAIGSACALMVIIVIVVVLF) form a helical membrane-spanning segment. Over 176–215 (QHFRKKRRAERAHRVVEIKSKEEEKLNQEKKASVSLEYTD) the chain is Cytoplasmic.

Belongs to the myelin P0 protein family.

Its subcellular location is the membrane. In terms of biological role, mediates homophilic cell-cell adhesion. In Bos taurus (Bovine), this protein is Myelin protein zero-like protein 2 (MPZL2).